Consider the following 156-residue polypeptide: ATP synthase subunit b (156 aa).

The chain crosses the membrane as a helical span at residues 7-29 (LIGQLIAFALFTWFCVKFVWPPI).

The protein belongs to the ATPase B chain family. F-type ATPases have 2 components, F(1) - the catalytic core - and F(0) - the membrane proton channel. F(1) has five subunits: alpha(3), beta(3), gamma(1), delta(1), epsilon(1). F(0) has three main subunits: a(1), b(2) and c(10-14). The alpha and beta chains form an alternating ring which encloses part of the gamma chain. F(1) is attached to F(0) by a central stalk formed by the gamma and epsilon chains, while a peripheral stalk is formed by the delta and b chains.

Its subcellular location is the cell inner membrane. Functionally, f(1)F(0) ATP synthase produces ATP from ADP in the presence of a proton or sodium gradient. F-type ATPases consist of two structural domains, F(1) containing the extramembraneous catalytic core and F(0) containing the membrane proton channel, linked together by a central stalk and a peripheral stalk. During catalysis, ATP synthesis in the catalytic domain of F(1) is coupled via a rotary mechanism of the central stalk subunits to proton translocation. Its function is as follows. Component of the F(0) channel, it forms part of the peripheral stalk, linking F(1) to F(0). This Actinobacillus succinogenes (strain ATCC 55618 / DSM 22257 / CCUG 43843 / 130Z) protein is ATP synthase subunit b.